The primary structure comprises 264 residues: Glutamate racemase (264 aa).

Substrate-binding positions include 10–11 (DS) and 42–43 (YG). Residue cysteine 73 is the Proton donor/acceptor of the active site. Residue 74–75 (NT) coordinates substrate. Cysteine 183 functions as the Proton donor/acceptor in the catalytic mechanism. 184–185 (TH) lines the substrate pocket.

Belongs to the aspartate/glutamate racemases family.

It catalyses the reaction L-glutamate = D-glutamate. It participates in cell wall biogenesis; peptidoglycan biosynthesis. Provides the (R)-glutamate required for cell wall biosynthesis. This Streptococcus suis (strain 98HAH33) protein is Glutamate racemase.